The primary structure comprises 372 residues: Fatty acid 2-hydroxylase (372 aa).

The region spanning 8-86 is the Cytochrome b5 heme-binding domain; that stretch reads AASFSPSEVQ…LEQYYVGELR (79 aa). His-43 and His-69 together coordinate heme. A run of 2 helical transmembrane segments spans residues 168 to 188 and 213 to 233; these read VWYSVPIIWVPLVLYLSWSYY and SMFPGLFMLGIFLWSLIEYLI. The Fatty acid hydroxylase domain occupies 219 to 361; sequence FMLGIFLWSL…TKLWDYCFHT (143 aa). Residues His-234, His-239, His-257, His-260, and His-261 each coordinate Zn(2+). Helical transmembrane passes span 271–291 and 292–312; these read VFPPVPASLVIGVFYLCLQLI and LPEAVGGTVFAGGLLGYVLYD. Residues His-315, His-319, His-336, His-339, and His-340 each contribute to the Zn(2+) site.

It belongs to the sterol desaturase family. SCS7 subfamily. Zn(2+) serves as cofactor.

It is found in the endoplasmic reticulum membrane. The protein resides in the microsome membrane. The catalysed reaction is a 1,2-saturated fatty acid + 2 Fe(II)-[cytochrome b5] + O2 + 2 H(+) = a (R)-2-hydroxy fatty acid + 2 Fe(III)-[cytochrome b5] + H2O. It carries out the reaction hexadecanoate + 2 Fe(II)-[cytochrome b5] + O2 + 2 H(+) = (R)-2-hydroxyhexadecanoate + 2 Fe(III)-[cytochrome b5] + H2O. The enzyme catalyses octadecanoate + 2 Fe(II)-[cytochrome b5] + O2 + 2 H(+) = (R)-2-hydroxyoctadecanoate + 2 Fe(III)-[cytochrome b5] + H2O. It catalyses the reaction docosanoate + 2 Fe(II)-[cytochrome b5] + O2 + 2 H(+) = 2-hydroxydocosanoate + 2 Fe(III)-[cytochrome b5] + H2O. The catalysed reaction is tetracosanoate + 2 Fe(II)-[cytochrome b5] + O2 + 2 H(+) = (R)-2-hydroxytetracosanoate + 2 Fe(III)-[cytochrome b5] + H2O. Its pathway is lipid metabolism; fatty acid metabolism. It participates in sphingolipid metabolism; galactosylceramide biosynthesis. Its function is as follows. Catalyzes the hydroxylation of free fatty acids at the C-2 position to produce 2-hydroxy fatty acids, which are building blocks of sphingolipids and glycosphingolipids common in neural tissue and epidermis. FA2H is stereospecific for the production of (R)-2-hydroxy fatty acids. Plays an essential role in the synthesis of galactosphingolipids of the myelin sheath. Responsible for the synthesis of sphingolipids and glycosphingolipids involved in the formation of epidermal lamellar bodies critical for skin permeability barrier. Participates in the synthesis of glycosphingolipids and a fraction of type II wax diesters in sebaceous gland, specifically regulating hair follicle homeostasis. Involved in the synthesis of sphingolipids of plasma membrane rafts, controlling lipid raft mobility and trafficking of raft-associated proteins. The chain is Fatty acid 2-hydroxylase (FA2H) from Macaca fascicularis (Crab-eating macaque).